The following is a 24-amino-acid chain: Unknown protein 3 (24 aa).

In Pseudotsuga menziesii (Douglas-fir), this protein is Unknown protein 3.